A 324-amino-acid polypeptide reads, in one-letter code: Phosphate transport system permease protein PstC 2 (324 aa).

A run of 6 helical transmembrane segments spans residues 30–50, 90–110, 125–145, 174–194, 237–257, and 290–310; these read ASAAGSTIVIAILLIAIFLLV, LSSITALVLAVPVAVGIAVFL, MVDLLAAVPSIIFGLWGIFVL, AGGGTIFTAGIVLSVMILPIV, VAASMLGLGRALGETVAVLVI, and PLPTGAYISAGFALFVLTFLV. The region spanning 85 to 314 is the ABC transmembrane type-1 domain; it reads FMVTALSSIT…VLTFLVNAAA (230 aa).

This sequence belongs to the binding-protein-dependent transport system permease family. CysTW subfamily.

Its subcellular location is the cell membrane. Functionally, part of the binding-protein-dependent transport system for phosphate; probably responsible for the translocation of the substrate across the membrane. This Mycobacterium bovis (strain ATCC BAA-935 / AF2122/97) protein is Phosphate transport system permease protein PstC 2 (pstC2).